A 292-amino-acid polypeptide reads, in one-letter code: Large ribosomal subunit protein mL67 (292 aa).

The segment at Val59–Gly83 is disordered.

The protein belongs to the mitochondrion-specific ribosomal protein mL67 family. As to quaternary structure, component of the mitochondrial large ribosomal subunit (mt-LSU). Mature N.crassa 74S mitochondrial ribosomes consist of a small (37S) and a large (54S) subunit. The 37S small subunit contains a 16S ribosomal RNA (16S mt-rRNA) and 32 different proteins. The 54S large subunit contains a 23S rRNA (23S mt-rRNA) and 42 different proteins.

It localises to the mitochondrion. In terms of biological role, component of the mitochondrial ribosome (mitoribosome), a dedicated translation machinery responsible for the synthesis of mitochondrial genome-encoded proteins, including at least some of the essential transmembrane subunits of the mitochondrial respiratory chain. The mitoribosomes are attached to the mitochondrial inner membrane and translation products are cotranslationally integrated into the membrane. mL67/MHR1 also has extraribosomal functions, being involved in regulation of mitochondrial DNA recombination, maintenance and repair, and generation of homoplasmic cells. mL67/MHR1 also acts as a transcription factor involved in regulation of RNA polymerase II-dependent transcription. This is Large ribosomal subunit protein mL67 (mhr1) from Neurospora crassa (strain ATCC 24698 / 74-OR23-1A / CBS 708.71 / DSM 1257 / FGSC 987).